The sequence spans 409 residues: Pyruvate dehydrogenase E1 component subunit alpha, mitochondrial (409 aa).

Phosphothreonine is present on T6. 11 residues coordinate pyruvate: H109, Y135, R136, A174, G182, V184, D213, G214, A215, N242, and Y244. Residues Y135 and R136 each coordinate thiamine diphosphate. Thiamine diphosphate-binding residues include G182, V184, D213, G214, A215, and N242. D213 provides a ligand contact to Mg(2+). Residues N242 and Y244 each coordinate Mg(2+). Y306 is modified (phosphotyrosine). H309 serves as a coordination point for thiamine diphosphate. Residues S310 and S312 each carry the phosphoserine modification.

Tetramer of 2 alpha and 2 beta subunits. Thiamine diphosphate serves as cofactor. Requires Mg(2+) as cofactor.

It is found in the mitochondrion matrix. The catalysed reaction is N(6)-[(R)-lipoyl]-L-lysyl-[protein] + pyruvate + H(+) = N(6)-[(R)-S(8)-acetyldihydrolipoyl]-L-lysyl-[protein] + CO2. Its activity is regulated as follows. E1 activity is regulated by phosphorylation (inactivation) and dephosphorylation (activation) of the alpha subunit. Functionally, the pyruvate dehydrogenase complex catalyzes the overall conversion of pyruvate to acetyl-CoA and CO(2). It contains multiple copies of three enzymatic components: pyruvate dehydrogenase (E1), dihydrolipoamide acetyltransferase (E2) and lipoamide dehydrogenase (E3). The chain is Pyruvate dehydrogenase E1 component subunit alpha, mitochondrial (pda1) from Schizosaccharomyces pombe (strain 972 / ATCC 24843) (Fission yeast).